A 283-amino-acid polypeptide reads, in one-letter code: MIDKRNKKAVTHISTCLCHSSIPIYGDSPFLNTHRAAMDPRPLVLLLLLASHISTFRQMYFEGETIHFPMGIYGNETTLYMNDIILEGTRANTTTRTISLTTTKKNAGTNLYTVISETGHNATYLITVQPLGQSIHHAYTWAGNTFTLQGQVFEHGNYTRWVRLENAEPKLIISWALSNRTINKGPAYTANMDFDPGNNTLTLHPVLITDAGIFQCVIDQQTNLTLTINFTVSENPPIVAHLDIHKTISRTIAICSCLLIAVIAVLCCLRQLNVNGRGNSEMI.

The signal sequence occupies residues 1 to 55 (MIDKRNKKAVTHISTCLCHSSIPIYGDSPFLNTHRAAMDPRPLVLLLLLASHIST). Asn75, Asn92, Asn121, Asn157, Asn179, Asn198, Asn223, and Asn229 each carry an N-linked (GlcNAc...) asparagine; by host glycan. The Ig-like domain maps to 129–227 (QPLGQSIHHA…IDQQTNLTLT (99 aa)).

The chain is Putative Ig-like domain-containing protein ORF10 from Galliformes (FAdV-1).